A 94-amino-acid polypeptide reads, in one-letter code: Protein S100-A1 (94 aa).

2 EF-hand domains span residues 13–48 (INVFHAHSGQEGDKYKLSKKELKDLLQTELSGFLDV) and 50–85 (KDADAVDKVMKELDENGDGEVDFKEYVVLVAALTVA). The Ca(2+) site is built by K28, E33, D63, N65, D67, E69, and E74. C86 bears the S-nitrosocysteine mark.

This sequence belongs to the S-100 family. In terms of assembly, dimer of either two alpha chains, or two beta chains, or one alpha and one beta chain. Also forms heterodimers with S100P. Interacts with AGER. Interacts with CAPZA1. Interacts with FKBP4. Interacts with RYR1 and RYR2. Interacts with CACYBP in a calcium-dependent manner. Interacts with PPP5C (via TPR repeats); the interaction is calcium-dependent and modulates PPP5C activity. Interacts with ATP2A2 and PLN in a Ca(2+)-dependent manner. Interacts with mitochondrial F1-ATPase subunits ATP5F1A and ATP5F1B; these interactions increase F1-ATPase activity. Post-translationally, glutathionylated; glutathionylation increases affinity to calcium about 10-fold. In terms of tissue distribution, expressed in the cardiac and the skeletal muscles.

Its subcellular location is the cytoplasm. The protein localises to the sarcoplasmic reticulum. It is found in the mitochondrion. Small calcium binding protein that plays important roles in several biological processes such as Ca(2+) homeostasis, chondrocyte biology and cardiomyocyte regulation. In response to an increase in intracellular Ca(2+) levels, binds calcium which triggers conformational changes. These changes allow interactions with specific target proteins and modulate their activity. Regulates a network in cardiomyocytes controlling sarcoplasmic reticulum Ca(2+) cycling and mitochondrial function through interaction with the ryanodine receptors RYR1 and RYR2, sarcoplasmic reticulum Ca(2+)-ATPase/ATP2A2 and mitochondrial F1-ATPase. Facilitates diastolic Ca(2+) dissociation and myofilament mechanics in order to improve relaxation during diastole. The sequence is that of Protein S100-A1 (S100a1) from Mus musculus (Mouse).